The sequence spans 287 residues: MMEKIRLILLSSRPISWINTAYPFGLAYLLNAGEIDWLFWLGIVFFLIPYNIAMYGINDVFDYESDMRNPRKGGVEGAVLPKSSHSTLLWASAISTIPFLVILFIFGTWMSSLWLTLSVLAVIAYSAPKLRFKERPFIDALTSSTHFTSPALIGATITGTSPSAAMWIALGSFFLWGMASQILGAVQDVNADREANLSSIATVIGARGAIRLSVVLYLLAAVLVTTLPNPAWIIGIAILTYVFNAARFWNITDASCEQANRSWKVFLWLNYFVGAVITILLIAIHQI.

The next 7 helical transmembrane spans lie at 15–35, 37–57, 87–107, 137–157, 166–186, 218–238, and 265–285; these read ISWINTAYPFGLAYLLNAGEI, WLFWLGIVFFLIPYNIAMYGI, TLLWASAISTIPFLVILFIFG, FIDALTSSTHFTSPALIGATI, MWIALGSFFLWGMASQILGAV, LLAAVLVTTLPNPAWIIGIAI, and VFLWLNYFVGAVITILLIAIH.

This sequence belongs to the UbiA prenyltransferase family.

It is found in the cell membrane. The enzyme catalyses all-trans-lycopene + dimethylallyl diphosphate + A + H2O = nonaflavuxanthin + AH2 + diphosphate. It catalyses the reaction nonaflavuxanthin + dimethylallyl diphosphate + A + H2O = flavuxanthin + AH2 + diphosphate. It participates in carotenoid biosynthesis. In terms of biological role, catalyzes the elongation of the C(40) carotenoid all-trans-lycopene to the acyclic C(50) carotenoid flavuxanthin during decaprenoxanthin biosynthesis. Acts as a bifunctional enzyme that catalyzes the elongation of lycopene by attaching a C(5) isoprene unit at C-2, as well as the hydroxylation of the new isoprene unit. The enzyme acts at both ends of the substrate, forming the C(50) carotenoid flavuxanthin via the C(45) intermediate nonaflavuxanthin. The chain is Lycopene elongase/hydratase from Corynebacterium glutamicum (strain ATCC 13032 / DSM 20300 / JCM 1318 / BCRC 11384 / CCUG 27702 / LMG 3730 / NBRC 12168 / NCIMB 10025 / NRRL B-2784 / 534).